The following is a 209-amino-acid chain: ATP-dependent Clp protease proteolytic subunit (209 aa).

Catalysis depends on serine 107, which acts as the Nucleophile. Histidine 132 is a catalytic residue.

Belongs to the peptidase S14 family. As to quaternary structure, fourteen ClpP subunits assemble into 2 heptameric rings which stack back to back to give a disk-like structure with a central cavity, resembling the structure of eukaryotic proteasomes.

It localises to the cytoplasm. It catalyses the reaction Hydrolysis of proteins to small peptides in the presence of ATP and magnesium. alpha-casein is the usual test substrate. In the absence of ATP, only oligopeptides shorter than five residues are hydrolyzed (such as succinyl-Leu-Tyr-|-NHMec, and Leu-Tyr-Leu-|-Tyr-Trp, in which cleavage of the -Tyr-|-Leu- and -Tyr-|-Trp bonds also occurs).. Functionally, cleaves peptides in various proteins in a process that requires ATP hydrolysis. Has a chymotrypsin-like activity. Plays a major role in the degradation of misfolded proteins. The polypeptide is ATP-dependent Clp protease proteolytic subunit (Ruegeria pomeroyi (strain ATCC 700808 / DSM 15171 / DSS-3) (Silicibacter pomeroyi)).